The primary structure comprises 51 residues: Large ribosomal subunit protein eL39-like (51 aa).

Belongs to the eukaryotic ribosomal protein eL39 family. Component of a male germ cell-specific 60S large ribosomal subunit (LSU), which contains RPL10L and RPL39L, instead of RPL10 and RPL39 paralogs. The composition of the rest of the complex is similar to classical ribosomes. In terms of tissue distribution, highly expressed in spermatocytes and spermatids. Highly expressed in embryonic stem cells.

It localises to the cytoplasm. In terms of biological role, male germ cell-specific component of the ribosome, which is required for the formation of sperm and male fertility. Replaces the RPL39 paralog in the ribosome of male germ cells. The ribosome is a large ribonucleoprotein complex responsible for the synthesis of proteins in the cell. The male germ cell-specific ribosome displays a ribosomal polypeptide exit tunnel of distinct size and charge states compared with the classical ribosome. It is responsible for regulating the biosynthesis and folding of a subset of male germ-cell-specific proteins that are essential for the formation of sperm. The sequence is that of Large ribosomal subunit protein eL39-like from Mus musculus (Mouse).